A 661-amino-acid polypeptide reads, in one-letter code: Peroxisomal acyl-coenzyme A oxidase 1 (661 aa).

A Phosphoserine modification is found at Ser26. Lys65 is modified (N6-acetyllysine). Residue Lys89 is modified to N6-succinyllysine. An FAD-binding site is contributed by Thr139. Lys159 is subject to N6-succinyllysine. Gly178 provides a ligand contact to FAD. Lys216 bears the N6-acetyllysine mark. The residue at position 241 (Lys241) is an N6-succinyllysine. N6-acetyllysine is present on residues Lys255, Lys267, and Lys272. Residue Lys349 is modified to N6-succinyllysine. The active-site Proton acceptor is Glu421. Lys437 and Lys446 each carry N6-acetyllysine; alternate. Lys437 and Lys446 each carry N6-succinyllysine; alternate. An N6-acetyllysine modification is found at Lys500. Lys512 is subject to N6-acetyllysine; alternate. Lys512 carries the N6-succinyllysine; alternate modification. Lys542 carries the post-translational modification N6-succinyllysine. Residue Lys637 is modified to N6-acetyllysine; alternate. Lys637 is subject to N6-succinyllysine; alternate. Lys643 carries the post-translational modification N6-succinyllysine. A Phosphoserine modification is found at Ser649. Position 652 is an N6-acetyllysine (Lys652). An N6-succinyllysine modification is found at Lys655. A Microbody targeting signal motif is present at residues 659 to 661; sequence SKL.

It belongs to the acyl-CoA oxidase family. In terms of assembly, homodimer. Interacts with LONP2. FAD serves as cofactor.

The protein resides in the peroxisome. It carries out the reaction a 2,3-saturated acyl-CoA + O2 = a (2E)-enoyl-CoA + H2O2. The enzyme catalyses hexadecanoyl-CoA + O2 = (2E)-hexadecenoyl-CoA + H2O2. The catalysed reaction is dodecanoyl-CoA + O2 = (2E)-dodecenoyl-CoA + H2O2. It catalyses the reaction octanoyl-CoA + O2 = (2E)-octenoyl-CoA + H2O2. It carries out the reaction decanoyl-CoA + O2 = (2E)-decenoyl-CoA + H2O2. The enzyme catalyses tetradecanoyl-CoA + O2 = (2E)-tetradecenoyl-CoA + H2O2. The catalysed reaction is hexadecanedioyl-CoA + O2 = (2E)-hexadecenedioyl-CoA + H2O2. It catalyses the reaction tetracosanoyl-CoA + O2 = (2E)-tetracosenoyl-CoA + H2O2. It carries out the reaction glutaryl-CoA + O2 = (2E)-glutaconyl-CoA + H2O2. The enzyme catalyses hexanoyl-CoA + O2 = (2E)-hexenoyl-CoA + H2O2. The catalysed reaction is octadecanoyl-CoA + O2 = (2E)-octadecenoyl-CoA + H2O2. It catalyses the reaction (5Z,8Z,11Z,14Z,17Z)-eicosapentaenoyl-CoA + O2 = (2E,5Z,8Z,11Z,14Z,17Z)-icosahexaenoyl-CoA + H2O2. It carries out the reaction (6Z,9Z,12Z,15Z,18Z,21Z)-tetracosahexaenoyl-CoA + O2 = (2E,6Z,9Z,12Z,15Z,18Z,21Z)-tetracosaheptaenoyl-CoA + H2O2. It participates in lipid metabolism; peroxisomal fatty acid beta-oxidation. Its function is as follows. Involved in the initial and rate-limiting step of peroxisomal beta-oxidation of straight-chain saturated and unsaturated very-long-chain fatty acids. Catalyzes the desaturation of fatty acyl-CoAs such as palmitoyl-CoA (hexadecanoyl-CoA) to 2-trans-enoyl-CoAs ((2E)-enoyl-CoAs) such as (2E)-hexadecenoyl-CoA, and donates electrons directly to molecular oxygen (O(2)), thereby producing hydrogen peroxide (H(2)O(2)). The polypeptide is Peroxisomal acyl-coenzyme A oxidase 1 (Cavia porcellus (Guinea pig)).